The following is a 265-amino-acid chain: Uronate dehydrogenase (265 aa).

Residues 12–13, 32–34, 49–50, and 69–73 each bind NAD(+); these read QL, DLS, DL, and LGGIS. Residues serine 73 and 109–111 each bind substrate; that span reads SNH. Catalysis depends on tyrosine 134, which acts as the Proton acceptor. Lysine 138 lines the NAD(+) pocket. Serine 163 lines the substrate pocket. Cysteine 164 contributes to the NAD(+) binding site. Residue arginine 172 coordinates substrate.

This sequence belongs to the NAD(P)-dependent epimerase/dehydratase family. Homohexamer.

It carries out the reaction beta-D-galacturonate + NAD(+) = D-galactaro-1,5-lactone + NADH + H(+). It catalyses the reaction beta-D-glucuronate + NAD(+) = D-glucaro-1,5-lactone + NADH + H(+). It functions in the pathway carbohydrate acid metabolism; D-galacturonate degradation via prokaryotic oxidative pathway. Functionally, catalyzes the oxidation of D-galacturonate and D-glucuronate to galactarate and D-glucarate, respectively. In fact, in water solution the substrate D-galacturonate is predominantly in pyranosic form whose beta anomer is converted by the enzyme to D-galactaro-1,5-lactone; in solution, this reaction product rearranges to the more stable D-galactaro-1,4-lactone. Makes part of the oxidative degradation pathway of D-galacturonate, which allows A.tumefaciens to utilize D-galacturonate as a sole carbon source. Cannot use NADP(+) instead of NAD(+) as cosubstrate. Is not active on D-galactose, D-glucose, D-galactonate and D-gluconate. The protein is Uronate dehydrogenase (udh) of Agrobacterium fabrum (strain C58 / ATCC 33970) (Agrobacterium tumefaciens (strain C58)).